Here is a 264-residue protein sequence, read N- to C-terminus: Thymidylate synthase (264 aa).

A dUMP-binding site is contributed by Arg21. His51 is a (6R)-5,10-methylene-5,6,7,8-tetrahydrofolate binding site. Arg126–Arg127 is a dUMP binding site. Cys146 (nucleophile) is an active-site residue. Residues Arg166–Asp169, Asn177, and His207–Tyr209 each bind dUMP. Position 169 (Asp169) interacts with (6R)-5,10-methylene-5,6,7,8-tetrahydrofolate. Ala263 serves as a coordination point for (6R)-5,10-methylene-5,6,7,8-tetrahydrofolate.

The protein belongs to the thymidylate synthase family. Bacterial-type ThyA subfamily. As to quaternary structure, homodimer.

It is found in the cytoplasm. It catalyses the reaction dUMP + (6R)-5,10-methylene-5,6,7,8-tetrahydrofolate = 7,8-dihydrofolate + dTMP. It participates in pyrimidine metabolism; dTTP biosynthesis. Catalyzes the reductive methylation of 2'-deoxyuridine-5'-monophosphate (dUMP) to 2'-deoxythymidine-5'-monophosphate (dTMP) while utilizing 5,10-methylenetetrahydrofolate (mTHF) as the methyl donor and reductant in the reaction, yielding dihydrofolate (DHF) as a by-product. This enzymatic reaction provides an intracellular de novo source of dTMP, an essential precursor for DNA biosynthesis. This Parabacteroides distasonis (strain ATCC 8503 / DSM 20701 / CIP 104284 / JCM 5825 / NCTC 11152) protein is Thymidylate synthase.